We begin with the raw amino-acid sequence, 83 residues long: MNPIISAASVIAAGLSVGLAAIGPGIGQGSAAGQALEGIARQPEAEGKIRGTLLLSLAFMEALTIYGLVVALSLLFANPFTAS.

The next 2 membrane-spanning stretches (helical) occupy residues 3 to 23 and 57 to 77; these read PIISAASVIAAGLSVGLAAIG and LAFMEALTIYGLVVALSLLFA.

This sequence belongs to the ATPase C chain family. F-type ATPases have 2 components, F(1) - the catalytic core - and F(0) - the membrane proton channel. F(1) has five subunits: alpha(3), beta(3), gamma(1), delta(1), epsilon(1). F(0) has four main subunits: a(1), b(1), b'(1) and c(10-14). The alpha and beta chains form an alternating ring which encloses part of the gamma chain. F(1) is attached to F(0) by a central stalk formed by the gamma and epsilon chains, while a peripheral stalk is formed by the delta, b and b' chains.

It localises to the plastid. Its subcellular location is the chloroplast thylakoid membrane. F(1)F(0) ATP synthase produces ATP from ADP in the presence of a proton or sodium gradient. F-type ATPases consist of two structural domains, F(1) containing the extramembraneous catalytic core and F(0) containing the membrane proton channel, linked together by a central stalk and a peripheral stalk. During catalysis, ATP synthesis in the catalytic domain of F(1) is coupled via a rotary mechanism of the central stalk subunits to proton translocation. Its function is as follows. Key component of the F(0) channel; it plays a direct role in translocation across the membrane. A homomeric c-ring of between 10-14 subunits forms the central stalk rotor element with the F(1) delta and epsilon subunits. This chain is ATP synthase subunit c, chloroplastic, found in Diacronema lutheri (Unicellular marine alga).